A 59-amino-acid polypeptide reads, in one-letter code: Protein translocase subunit SecE (59 aa).

The helical transmembrane segment at leucine 37–leucine 57 threads the bilayer.

The protein belongs to the SecE/SEC61-gamma family. Component of the Sec protein translocase complex. Heterotrimer consisting of SecY (alpha), SecG (beta) and SecE (gamma) subunits. The heterotrimers can form oligomers, although 1 heterotrimer is thought to be able to translocate proteins. Interacts with the ribosome. May interact with SecDF, and other proteins may be involved.

The protein resides in the cell membrane. Essential subunit of the Sec protein translocation channel SecYEG. Clamps together the 2 halves of SecY. May contact the channel plug during translocation. The chain is Protein translocase subunit SecE from Metallosphaera sedula (strain ATCC 51363 / DSM 5348 / JCM 9185 / NBRC 15509 / TH2).